Consider the following 872-residue polypeptide: Alanine--tRNA ligase (872 aa).

Zn(2+)-binding residues include histidine 561, histidine 565, cysteine 662, and histidine 666.

Belongs to the class-II aminoacyl-tRNA synthetase family. Zn(2+) is required as a cofactor.

The protein resides in the cytoplasm. It carries out the reaction tRNA(Ala) + L-alanine + ATP = L-alanyl-tRNA(Ala) + AMP + diphosphate. Functionally, catalyzes the attachment of alanine to tRNA(Ala) in a two-step reaction: alanine is first activated by ATP to form Ala-AMP and then transferred to the acceptor end of tRNA(Ala). Also edits incorrectly charged Ser-tRNA(Ala) and Gly-tRNA(Ala) via its editing domain. The protein is Alanine--tRNA ligase of Thiobacillus denitrificans (strain ATCC 25259 / T1).